The chain runs to 185 residues: Large ribosomal subunit protein uL10 (185 aa).

The segment at 165–185 (LRAKKEEQGGAGTPAPAEAAE) is disordered.

This sequence belongs to the universal ribosomal protein uL10 family. Part of the ribosomal stalk of the 50S ribosomal subunit. The N-terminus interacts with L11 and the large rRNA to form the base of the stalk. The C-terminus forms an elongated spine to which L12 dimers bind in a sequential fashion forming a multimeric L10(L12)X complex.

Its function is as follows. Forms part of the ribosomal stalk, playing a central role in the interaction of the ribosome with GTP-bound translation factors. This chain is Large ribosomal subunit protein uL10, found in Streptomyces griseus subsp. griseus (strain JCM 4626 / CBS 651.72 / NBRC 13350 / KCC S-0626 / ISP 5235).